We begin with the raw amino-acid sequence, 149 residues long: Oligosaccharyltransferase complex subunit OSTC (149 aa).

Residues M1–T32 lie on the Cytoplasmic side of the membrane. Residues V33–I53 traverse the membrane as a helical segment. The Extracellular portion of the chain corresponds to V54–Y83. The helical transmembrane segment at I84 to L104 threads the bilayer. Over D105 to R117 the chain is Cytoplasmic. A helical membrane pass occupies residues F118 to F138. Residues M139–G149 are Extracellular-facing.

It belongs to the OSTC family. Component of STT3A-containing oligosaccharyl transferase (OST-A) complex. STT3A-containing complex assembly occurs through the formation of 3 subcomplexes. Subcomplex 1 contains RPN1 and TMEM258, subcomplex 2 contains the STT3A-specific subunits STT3A, DC2/OSTC, and KCP2 as well as the core subunit OST4, and subcomplex 3 contains RPN2, DAD1, and OST48. The OST-A complex can form stable complexes with the Sec61 complex or with both the Sec61 and TRAP complexes. Interacts with PSEN1 and NCSTN; indicative for an association with the gamma-secretase complex.

Its subcellular location is the endoplasmic reticulum. The protein localises to the membrane. It participates in protein modification; protein glycosylation. Subunit of STT3A-containing oligosaccharyl transferase (OST-A) complex that catalyzes the initial transfer of a defined glycan (Glc(3)Man(9)GlcNAc(2) in eukaryotes) from the lipid carrier dolichol-pyrophosphate to an asparagine residue within an Asn-X-Ser/Thr consensus motif in nascent polypeptide chains, the first step in protein N-glycosylation. N-glycosylation occurs cotranslationally and the complex associates with the Sec61 complex at the channel-forming translocon complex that mediates protein translocation across the endoplasmic reticulum (ER). Within the OST-A complex, acts as an adapter that anchors the OST-A complex to the Sec61 complex. May be involved in N-glycosylation of APP (amyloid-beta precursor protein). Can modulate gamma-secretase cleavage of APP by enhancing endoprotelysis of PSEN1. The sequence is that of Oligosaccharyltransferase complex subunit OSTC from Homo sapiens (Human).